A 76-amino-acid polypeptide reads, in one-letter code: Putative membrane protein insertion efficiency factor (76 aa).

This sequence belongs to the UPF0161 family.

It localises to the cell inner membrane. Could be involved in insertion of integral membrane proteins into the membrane. This chain is Putative membrane protein insertion efficiency factor, found in Paraburkholderia phytofirmans (strain DSM 17436 / LMG 22146 / PsJN) (Burkholderia phytofirmans).